The primary structure comprises 139 residues: Small ribosomal subunit protein uS12 (139 aa).

The disordered stretch occupies residues 1–21 (MPTINQLVRKGRKAVQEKSTA). Aspartate 102 bears the 3-methylthioaspartic acid mark.

The protein belongs to the universal ribosomal protein uS12 family. In terms of assembly, part of the 30S ribosomal subunit. Contacts proteins S8 and S17. May interact with IF1 in the 30S initiation complex.

With S4 and S5 plays an important role in translational accuracy. Functionally, interacts with and stabilizes bases of the 16S rRNA that are involved in tRNA selection in the A site and with the mRNA backbone. Located at the interface of the 30S and 50S subunits, it traverses the body of the 30S subunit contacting proteins on the other side and probably holding the rRNA structure together. The combined cluster of proteins S8, S12 and S17 appears to hold together the shoulder and platform of the 30S subunit. The protein is Small ribosomal subunit protein uS12 of Alkaliphilus metalliredigens (strain QYMF).